A 644-amino-acid polypeptide reads, in one-letter code: 1-deoxy-D-xylulose-5-phosphate synthase (644 aa).

Residues His-78 and 120–122 contribute to the thiamine diphosphate site; that span reads GHA. Asp-149 is a Mg(2+) binding site. Thiamine diphosphate contacts are provided by residues 150–151, Asn-178, and Glu-373; that span reads AA. A Mg(2+)-binding site is contributed by Asn-178.

The protein belongs to the transketolase family. DXPS subfamily. In terms of assembly, homodimer. It depends on Mg(2+) as a cofactor. Thiamine diphosphate is required as a cofactor.

The enzyme catalyses D-glyceraldehyde 3-phosphate + pyruvate + H(+) = 1-deoxy-D-xylulose 5-phosphate + CO2. The protein operates within metabolic intermediate biosynthesis; 1-deoxy-D-xylulose 5-phosphate biosynthesis; 1-deoxy-D-xylulose 5-phosphate from D-glyceraldehyde 3-phosphate and pyruvate: step 1/1. Its function is as follows. Catalyzes the acyloin condensation reaction between C atoms 2 and 3 of pyruvate and glyceraldehyde 3-phosphate to yield 1-deoxy-D-xylulose-5-phosphate (DXP). This chain is 1-deoxy-D-xylulose-5-phosphate synthase, found in Chlamydia felis (strain Fe/C-56) (Chlamydophila felis).